Here is a 907-residue protein sequence, read N- to C-terminus: Protein translocase subunit SecA (907 aa).

Residues Gln87, 105–109, and Asp512 each bind ATP; that span reads GEGKT. The segment at 834–907 is disordered; sequence QEDVERMEEQ…KKYKQCHGKI (74 aa). Basic and acidic residues-rich tracts occupy residues 836 to 853 and 873 to 888; these read DVER…EAAR and EEAH…KVGR. Cys892, Cys894, Cys903, and His904 together coordinate Zn(2+). Over residues 898 to 907 the composition is skewed to basic residues; that stretch reads KKYKQCHGKI.

The protein belongs to the SecA family. As to quaternary structure, monomer and homodimer. Part of the essential Sec protein translocation apparatus which comprises SecA, SecYEG and auxiliary proteins SecDF-YajC and YidC. The cofactor is Zn(2+).

It localises to the cell inner membrane. It is found in the cytoplasm. It carries out the reaction ATP + H2O + cellular proteinSide 1 = ADP + phosphate + cellular proteinSide 2.. Part of the Sec protein translocase complex. Interacts with the SecYEG preprotein conducting channel. Has a central role in coupling the hydrolysis of ATP to the transfer of proteins into and across the cell membrane, serving both as a receptor for the preprotein-SecB complex and as an ATP-driven molecular motor driving the stepwise translocation of polypeptide chains across the membrane. The sequence is that of Protein translocase subunit SecA from Aliivibrio fischeri (strain ATCC 700601 / ES114) (Vibrio fischeri).